The primary structure comprises 138 residues: Cysteine desulfuration protein SufE (138 aa).

Cysteine 51 (cysteine persulfide intermediate) is an active-site residue.

This sequence belongs to the SufE family. Homodimer. Interacts with SufS.

It localises to the cytoplasm. It functions in the pathway cofactor biosynthesis; iron-sulfur cluster biosynthesis. Its function is as follows. Participates in cysteine desulfuration mediated by SufS. Cysteine desulfuration mobilizes sulfur from L-cysteine to yield L-alanine and constitutes an essential step in sulfur metabolism for biosynthesis of a variety of sulfur-containing biomolecules. Functions as a sulfur acceptor for SufS, by mediating the direct transfer of the sulfur atom from the S-sulfanylcysteine of SufS, an intermediate product of cysteine desulfuration process. This chain is Cysteine desulfuration protein SufE, found in Escherichia coli O45:K1 (strain S88 / ExPEC).